The following is a 499-amino-acid chain: Cytochrome P450 ARB_01131 (499 aa).

The signal sequence occupies residues 1–21; it reads MLSLIVACLVLPLICYKLVRS. N23 is a glycosylation site (N-linked (GlcNAc...) asparagine). Heme is bound at residue C437.

The protein belongs to the cytochrome P450 family. Heme serves as cofactor.

Functionally, together with an NADPH cytochrome P450 the enzyme system catalyzes the terminal hydroxylation as the first step in the assimilation of alkanes and fatty acids. This chain is Cytochrome P450 ARB_01131, found in Arthroderma benhamiae (strain ATCC MYA-4681 / CBS 112371) (Trichophyton mentagrophytes).